Consider the following 32-residue polypeptide: Beta-1,4-galactosyltransferase 1 (32 aa).

This sequence belongs to the glycosyltransferase 7 family. The cofactor is Mn(2+). In terms of processing, the soluble form derives from the membrane form by proteolytic processing.

It is found in the golgi apparatus. The protein localises to the golgi stack membrane. Its subcellular location is the secreted. The protein resides in the cell membrane. It localises to the cell projection. It is found in the filopodium. The catalysed reaction is D-glucose + UDP-alpha-D-galactose = lactose + UDP + H(+). It carries out the reaction an N-acetyl-beta-D-glucosaminyl derivative + UDP-alpha-D-galactose = a beta-D-galactosyl-(1-&gt;4)-N-acetyl-beta-D-glucosaminyl derivative + UDP + H(+). It catalyses the reaction N-acetyl-D-glucosamine + UDP-alpha-D-galactose = beta-D-galactosyl-(1-&gt;4)-N-acetyl-D-glucosamine + UDP + H(+). The enzyme catalyses a beta-D-GlcNAc-(1-&gt;3)-beta-D-Gal-(1-&gt;4)-beta-D-Glc-(1&lt;-&gt;1)-Cer(d18:1(4E)) + UDP-alpha-D-galactose = a neolactoside nLc4Cer(d18:1(4E)) + UDP + H(+). The catalysed reaction is a beta-D-glucosylceramide + UDP-alpha-D-galactose = a beta-D-galactosyl-(1-&gt;4)-beta-D-glucosyl-(1&lt;-&gt;1)-ceramide + UDP + H(+). It carries out the reaction a neolactoside IV(3)-beta-GlcNAc-nLc4Cer + UDP-alpha-D-galactose = a neolactoside nLc6Cer + UDP + H(+). It participates in protein modification; protein glycosylation. In terms of biological role, this protein is responsible for the synthesis of complex-type N-linked oligosaccharides in many glycoproteins as well as the carbohydrate moieties of glycolipids. The sequence is that of Beta-1,4-galactosyltransferase 1 from Rattus norvegicus (Rat).